The primary structure comprises 926 residues: Up-regulator of cell proliferation (926 aa).

The residue at position 3 (S3) is a Phosphoserine. The VLIG-type G domain maps to 689-924; it reads RSRLVVLSAL…NIQQLIELLR (236 aa).

It belongs to the TRAFAC class dynamin-like GTPase superfamily. Very large inducible GTPase (VLIG) family.

The protein resides in the cytoplasm. It localises to the nucleus. Functionally, may be involved in cell cycle progression through the regulation of cyclin D1 expression. The polypeptide is Up-regulator of cell proliferation (Urgcp) (Mus musculus (Mouse)).